The primary structure comprises 479 residues: Glutamate receptor U1 (479 aa).

An N-terminal signal peptide occupies residues 1–17 (MEKSLLFLFAVTLLSVG). Over 18 to 163 (CTDAGESKGS…LFGFLTPFSK (146 aa)) the chain is Extracellular. An N-linked (GlcNAc...) asparagine glycan is attached at N79. The chain crosses the membrane as a helical span at residues 164 to 184 (ETWIGILVAYMVTSLCLFLVG). The Cytoplasmic segment spans residues 185–229 (RLSPCEWTELSTEQNNFTFLNSLWFGAGAFTLQGAEPHPKSVSAR). A helical transmembrane segment spans residues 230–250 (IIAVIWWIFSIVLVAAYIASF). At 251 to 414 (AAFLNSDSVQ…AGWNPVQPHT (164 aa)) the chain is on the extracellular side. The N-linked (GlcNAc...) asparagine glycan is linked to N282. Residues 415–435 (LGGIFLILGIGLALGVIAALI) form a helical membrane-spanning segment. Over 436–479 (ELVLKARNNADQQKKSCCSAFSEEMGERLGTNKENQGAVDSVKS) the chain is Cytoplasmic.

This sequence belongs to the glutamate-gated ion channel (TC 1.A.10.1) family. As to quaternary structure, homomeric.

It is found in the cell membrane. It localises to the postsynaptic cell membrane. Receptor for glutamate. L-glutamate acts as an excitatory neurotransmitter at many synapses in the central nervous system. The postsynaptic actions of Glu are mediated by a variety of receptors that are named according to their selective agonists. This receptor binds domoate &gt; kainate &gt; AMPA &gt; NBQX &gt; glutamate. This is Glutamate receptor U1 (kbp) from Xenopus laevis (African clawed frog).